The sequence spans 93 residues: uncharacterized protein (93 aa).

Positions 36–69 form a coiled coil; sequence SEERLLSRLFEEMDELREAVEKEDWENLRDELLD.

This is an uncharacterized protein from Archaeoglobus fulgidus (strain ATCC 49558 / DSM 4304 / JCM 9628 / NBRC 100126 / VC-16).